A 362-amino-acid chain; its full sequence is Red-sensitive opsin (362 aa).

At 1 to 49 (MAAWEAAFAARRRHEEEDTTRDSVFTYTNSNNTRGPFEGPNYHIAPRWV) the chain is on the extracellular side. N-linked (GlcNAc...) asparagine glycosylation occurs at Asn31. The chain crosses the membrane as a helical span at residues 50-74 (YNLTSVWMIFVVAASVFTNGLVLVA). Topologically, residues 75–86 (TWKFKKLRHPLN) are cytoplasmic. A helical transmembrane segment spans residues 87-112 (WILVNLAVADLGETVIASTISVINQI). The Extracellular segment spans residues 113–126 (SGYFILGHPMCVVE). The cysteines at positions 123 and 200 are disulfide-linked. The helical transmembrane segment at 127–146 (GYTVSACGITALWSLAIISW) threads the bilayer. Residues 147–165 (ERWFVVCKPFGNIKFDGKL) lie on the Cytoplasmic side of the membrane. Residues 166–189 (AVAGILFSWLWSCAWTAPPIFGWS) form a helical membrane-spanning segment. At 190–215 (RYWPHGLKTSCGPDVFSGSSDPGVQS) the chain is on the extracellular side. Residues 216 to 243 (YMVVLMVTCCFFPLAIIILCYLQVWLAI) form a helical membrane-spanning segment. Residues 244 to 265 (RAVAAQQKESESTQKAEKEVSR) lie on the Cytoplasmic side of the membrane. Residues 266 to 289 (MVVVMIVAYCFCWGPYTFFACFAA) form a helical membrane-spanning segment. At 290-297 (ANPGYAFH) the chain is on the extracellular side. A helical transmembrane segment spans residues 298 to 322 (PLAAALPAYFAKSATIYNPIIYVFM). Lys309 carries the post-translational modification N6-(retinylidene)lysine. Residues 323–362 (NRQFRNCILQLFGKKVDDGSEVSTSRTEVSSVSNSSVSPA) lie on the Cytoplasmic side of the membrane.

This sequence belongs to the G-protein coupled receptor 1 family. Opsin subfamily. Post-translationally, phosphorylated on some or all of the serine and threonine residues present in the C-terminal region. In terms of tissue distribution, the color pigments are found in the cone photoreceptor cells.

It is found in the membrane. Visual pigments are the light-absorbing molecules that mediate vision. They consist of an apoprotein, opsin, covalently linked to cis-retinal. The chain is Red-sensitive opsin from Gallus gallus (Chicken).